Reading from the N-terminus, the 128-residue chain is MTRIKRGYIARRRRKKISLFASSFRGAHSRLTRTITQQRIRALVSAHRDRDRKKRDFRRLWITRINAVIRGVGVSYSYSRLIHNLYKKQLLLNRKILAQIAISNRNCLYMISNEIRKEGDRKESNEML.

It belongs to the bacterial ribosomal protein bL20 family.

It localises to the plastid. It is found in the chloroplast. Functionally, binds directly to 23S ribosomal RNA and is necessary for the in vitro assembly process of the 50S ribosomal subunit. It is not involved in the protein synthesizing functions of that subunit. In Gossypium barbadense (Sea Island cotton), this protein is Large ribosomal subunit protein bL20c.